The primary structure comprises 276 residues: NH(3)-dependent NAD(+) synthetase (276 aa).

43–50 (GISGGVDS) is a binding site for ATP. Residue aspartate 49 coordinates Mg(2+). Deamido-NAD(+) is bound at residue arginine 146. Threonine 166 contributes to the ATP binding site. Glutamate 171 lines the Mg(2+) pocket. Deamido-NAD(+) contacts are provided by lysine 179 and aspartate 186. ATP is bound by residues lysine 195 and threonine 217. A deamido-NAD(+)-binding site is contributed by 266–267 (HK).

This sequence belongs to the NAD synthetase family. Homodimer.

It carries out the reaction deamido-NAD(+) + NH4(+) + ATP = AMP + diphosphate + NAD(+) + H(+). The protein operates within cofactor biosynthesis; NAD(+) biosynthesis; NAD(+) from deamido-NAD(+) (ammonia route): step 1/1. In terms of biological role, catalyzes the ATP-dependent amidation of deamido-NAD to form NAD. Uses ammonia as a nitrogen source. The chain is NH(3)-dependent NAD(+) synthetase from Shewanella pealeana (strain ATCC 700345 / ANG-SQ1).